Here is a 276-residue protein sequence, read N- to C-terminus: Pre-rRNA-processing protein PNO1 (276 aa).

2 disordered regions span residues 1–39 (MAAP…NDDE) and 51–92 (TTVE…SKSN). Composition is skewed to polar residues over residues 13–34 (KSGI…ALDQ) and 51–75 (TTVE…TTEL). Residues 197 to 249 (GDHLSRAIGRIAGKDGKTKFAIENATRTRIVLADSKIHILGGFTHIRMAREAV) form the KH domain.

This sequence belongs to the PNO1 family. As to quaternary structure, component of the small ribosomal subunit, ribosomal RNA processing complex (SSU RRP complex).

The protein resides in the cytoplasm. Its subcellular location is the nucleus. It localises to the nucleolus. In terms of biological role, required for small ribosomal subunit (SSU) synthesis. Has a role in the processing of early nucleolar and late cytoplasmic pre-RNA species. The sequence is that of Pre-rRNA-processing protein PNO1 (PNO1) from Candida albicans (strain SC5314 / ATCC MYA-2876) (Yeast).